The chain runs to 143 residues: Hemoglobin subunit alpha-1 (143 aa).

Ser2 carries the post-translational modification N-acetylserine. Residues 2-143 (SLSSKDKATV…LALALAEKYR (142 aa)) form the Globin domain. His60 is a binding site for O2. His89 contacts heme b.

This sequence belongs to the globin family. Hb 1 is a heterotetramer of two alpha-1 and two beta-1 chains. As to expression, red blood cells.

In terms of biological role, involved in oxygen transport from gills to the various peripheral tissues. The sequence is that of Hemoglobin subunit alpha-1 (hba1) from Arctogadus glacialis (Arctic cod).